The chain runs to 145 residues: LIM domain only protein 3 (145 aa).

2 LIM zinc-binding domains span residues 11 to 73 and 75 to 137; these read KGCA…LFGV and GNCA…GLMK.

This is LIM domain only protein 3 from Danio rerio (Zebrafish).